The chain runs to 32 residues: Ranatuerin-2BYa (32 aa).

The cysteines at positions 27 and 32 are disulfide-linked.

As to expression, expressed by the skin glands.

It localises to the secreted. In terms of biological role, antibacterial activity against Gram-positive bacterium S.aureus and Gram-negative bacterium E.coli. Weak hemolytic activity. This is Ranatuerin-2BYa from Rana boylii (Foothill yellow-legged frog).